The primary structure comprises 415 residues: T-cell-specific guanine nucleotide triphosphate-binding protein 1 (415 aa).

Positions 55–237 (APLHIAVTGE…PKLETKLLQD (183 aa)) constitute an IRG-type G domain. Positions 66, 68, 69, and 70 each coordinate GDP. Threonine 89 is subject to (Microbial infection) Phosphothreonine; by ROP17. 4 residues coordinate GDP: glycine 90, lysine 171, aspartate 173, and asparagine 219.

The protein belongs to the TRAFAC class dynamin-like GTPase superfamily. IRG family. As to quaternary structure, monomer, homodimer or homotetramer in the presence of GTP. Forms higher order homooligomers in GTP-dependent manner. (Microbial infection) Interacts with Toxoplasma gondii ROP18. Post-translationally, (Microbial infection) Phosphorylated by Toxoplasma gondii ROP17; the phosphorylation leads to disassembly of IRGB6 (TGTP1/TGTP2) polymers into monomers and dimers. Phosphorylated by Toxoplasma gondii ROP18. In terms of tissue distribution, expressed in thymus and lymph nodes, predominantly T-cells. Not expressed by immature CD4(+) CD8(+) thymocytes (at protein level). Expressed in IFNG-stimulated macrophages. Expressed at low levels in unstimulated astrocytes. Due to sequence similarity with Tgtp2, it is impossible to assign unambiguously experimental data published in the literature to Tgtp1 or Tgtp2 gene.

Its subcellular location is the cytoplasm. The protein resides in the endoplasmic reticulum. The protein localises to the golgi apparatus. It is found in the parasitophorous vacuole membrane. The enzyme catalyses GTP + H2O = GDP + phosphate + H(+). In terms of biological role, involved in innate cell-autonomous resistance to intracellular pathogens, such as Toxoplasma gondii. During avirulent type II T.gondii infection, recruited to the parasitophorous vacuole (PV) membrane, leading to PV vesiculation and rupture, and subsequent digestion of the parasite within the cytosol. Not recruited to virulent type I T.gondii PV membrane. May confer an antiviral state for vesicular stomatitis virus. This chain is T-cell-specific guanine nucleotide triphosphate-binding protein 1 (Tgtp1), found in Mus musculus (Mouse).